We begin with the raw amino-acid sequence, 386 residues long: Copper-containing nitrite reductase (386 aa).

Positions 1-18 (MKRQALAAIIASMFALAA) are cleaved as a signal peptide. Cysteine 19 is lipidated: N-palmitoyl cysteine. Cysteine 19 is lipidated: S-diacylglycerol cysteine. 2 consecutive Plastocyanin-like domains span residues 97–191 (WTFD…ILVE) and 241–342 (GHVG…LKVE). Cu cation contacts are provided by histidine 130, histidine 135, histidine 170, cysteine 171, histidine 179, and methionine 184. Position 135 (histidine 135) interacts with substrate. Histidine 276 is a substrate binding site. Residue histidine 325 coordinates Cu cation. Residues 363–386 (GAAPAASAPAASAPAASAPAKSDY) form a disordered region. The span at 364 to 386 (AAPAASAPAASAPAASAPAKSDY) shows a compositional bias: low complexity. 3 consecutive repeat copies span residues 367–371 (AASAP), 372–376 (AASAP), and 377–381 (AASAP). Residues 367 to 381 (AASAPAASAPAASAP) form a 3 X 5 AA tandem repeats of A-A-S-A-P region.

This sequence belongs to the multicopper oxidase family. As to quaternary structure, homotrimer. The cofactor is Cu(+). Cu(2+) serves as cofactor.

The protein resides in the cell outer membrane. The catalysed reaction is nitric oxide + Fe(III)-[cytochrome c] + H2O = Fe(II)-[cytochrome c] + nitrite + 2 H(+). Its function is as follows. Catalyzes the reduction of nitrite to nitric oxide (NO). It could be essential for growth and survival in oxygen-depleted environments. This is Copper-containing nitrite reductase (aniA) from Neisseria meningitidis serogroup A / serotype 4A (strain DSM 15465 / Z2491).